The primary structure comprises 351 residues: Putative [LysW]-L-2-aminoadipate/[LysW]-L-glutamate phosphate reductase (351 aa).

Residues 10–13 (SGFT) and 34–36 (SRK) each bind NADP(+). Cysteine 151 is an active-site residue. Residue asparagine 318 participates in NADP(+) binding.

It belongs to the NAGSA dehydrogenase family. Type 1 subfamily. LysY sub-subfamily.

The protein resides in the cytoplasm. The enzyme catalyses [amino-group carrier protein]-C-terminal-N-(1-carboxy-5-oxopentan-1-yl)-L-glutamine + phosphate + NADP(+) = [amino-group carrier protein]-C-terminal-N-(1-carboxy-5-phosphooxy-5-oxopentan-1-yl)-L-glutamine + NADPH + H(+). It catalyses the reaction [amino-group carrier protein]-C-terminal-gamma-(L-glutamyl-5-semialdehyde)-L-glutamate + phosphate + NADP(+) = [amino-group carrier protein]-C-terminal-gamma-(5-phospho-L-glutamyl)-L-glutamate + NADPH + H(+). It functions in the pathway amino-acid biosynthesis; L-lysine biosynthesis via AAA pathway; L-lysine from L-alpha-aminoadipate (Thermus route): step 3/5. Its pathway is amino-acid biosynthesis; L-arginine biosynthesis. Its function is as follows. Involved in both the arginine and lysine biosynthetic pathways. This Pyrobaculum calidifontis (strain DSM 21063 / JCM 11548 / VA1) protein is Putative [LysW]-L-2-aminoadipate/[LysW]-L-glutamate phosphate reductase.